Reading from the N-terminus, the 209-residue chain is Large ribosomal subunit protein uL3 (209 aa).

The interval 125–148 is disordered; sequence RHGQSRGPMAHGSRYHRRPGSMGP.

It belongs to the universal ribosomal protein uL3 family. In terms of assembly, part of the 50S ribosomal subunit. Forms a cluster with proteins L14 and L19.

One of the primary rRNA binding proteins, it binds directly near the 3'-end of the 23S rRNA, where it nucleates assembly of the 50S subunit. This chain is Large ribosomal subunit protein uL3, found in Lysinibacillus sphaericus (strain C3-41).